A 150-amino-acid polypeptide reads, in one-letter code: UPF0178 protein Rru_A0086 (150 aa).

It belongs to the UPF0178 family.

This is UPF0178 protein Rru_A0086 from Rhodospirillum rubrum (strain ATCC 11170 / ATH 1.1.1 / DSM 467 / LMG 4362 / NCIMB 8255 / S1).